The primary structure comprises 176 residues: Inorganic pyrophosphatase (176 aa).

Residues lysine 31, arginine 45, and tyrosine 57 each contribute to the substrate site. Residues aspartate 67, aspartate 72, and aspartate 104 each coordinate Mg(2+). Tyrosine 141 serves as a coordination point for substrate.

The protein belongs to the PPase family. As to quaternary structure, homohexamer. Mg(2+) serves as cofactor.

It localises to the cytoplasm. It catalyses the reaction diphosphate + H2O = 2 phosphate + H(+). In terms of biological role, catalyzes the hydrolysis of inorganic pyrophosphate (PPi) forming two phosphate ions. The polypeptide is Inorganic pyrophosphatase (Methanopyrus kandleri (strain AV19 / DSM 6324 / JCM 9639 / NBRC 100938)).